The primary structure comprises 408 residues: tRNA pseudouridine synthase D (408 aa).

D76 functions as the Nucleophile in the catalytic mechanism. Residues 149–362 enclose the TRUD domain; sequence GFINYYDSQR…NSFERKVRIL (214 aa).

Belongs to the pseudouridine synthase TruD family.

It catalyses the reaction uridine(13) in tRNA = pseudouridine(13) in tRNA. Its function is as follows. Responsible for synthesis of pseudouridine from uracil-13 in transfer RNAs. The chain is tRNA pseudouridine synthase D from Leptospira interrogans serogroup Icterohaemorrhagiae serovar Lai (strain 56601).